Consider the following 272-residue polypeptide: NH(3)-dependent NAD(+) synthetase (272 aa).

45–52 (GISGGQDS) is a binding site for ATP. Mg(2+) is bound at residue aspartate 51. Arginine 138 serves as a coordination point for deamido-NAD(+). ATP is bound at residue threonine 158. Mg(2+) is bound at residue glutamate 163. 2 residues coordinate deamido-NAD(+): lysine 171 and aspartate 178. ATP is bound by residues lysine 187 and threonine 209. 258–259 (HK) lines the deamido-NAD(+) pocket.

The protein belongs to the NAD synthetase family. In terms of assembly, homodimer.

It catalyses the reaction deamido-NAD(+) + NH4(+) + ATP = AMP + diphosphate + NAD(+) + H(+). It functions in the pathway cofactor biosynthesis; NAD(+) biosynthesis; NAD(+) from deamido-NAD(+) (ammonia route): step 1/1. Its function is as follows. Catalyzes the ATP-dependent amidation of deamido-NAD to form NAD. Uses ammonia as a nitrogen source. The sequence is that of NH(3)-dependent NAD(+) synthetase from Bacillus cereus (strain 03BB102).